A 559-amino-acid polypeptide reads, in one-letter code: DNA ligase (559 aa).

An ATP-binding site is contributed by Glu247. The active-site N6-AMP-lysine intermediate is Lys249. 6 residues coordinate ATP: Arg254, Arg269, Glu299, Phe339, Arg414, and Lys420.

The protein belongs to the ATP-dependent DNA ligase family. Mg(2+) serves as cofactor.

It catalyses the reaction ATP + (deoxyribonucleotide)n-3'-hydroxyl + 5'-phospho-(deoxyribonucleotide)m = (deoxyribonucleotide)n+m + AMP + diphosphate.. In terms of biological role, DNA ligase that seals nicks in double-stranded DNA during DNA replication, DNA recombination and DNA repair. The polypeptide is DNA ligase (Pyrococcus abyssi (strain GE5 / Orsay)).